The primary structure comprises 520 residues: Cholesterol side-chain cleavage enzyme, mitochondrial (520 aa).

A mitochondrion-targeting transit peptide spans 1–39 (MLARGLPLRSALVKACPPLLNTGREGWGHHRVGTGEGAG). The disordered stretch occupies residues 27 to 48 (WGHHRVGTGEGAGISTRTPRPY). Residue cysteine 461 coordinates heme.

This sequence belongs to the cytochrome P450 family. Interacts with FDX1/adrenodoxin. Requires heme as cofactor.

It localises to the mitochondrion inner membrane. The catalysed reaction is 6 reduced [adrenodoxin] + cholesterol + 3 O2 + 6 H(+) = 4-methylpentanal + pregnenolone + 6 oxidized [adrenodoxin] + 4 H2O. The enzyme catalyses 2 reduced [adrenodoxin] + cholesterol + O2 + 2 H(+) = (22R)-hydroxycholesterol + 2 oxidized [adrenodoxin] + H2O. It carries out the reaction (22R)-hydroxycholesterol + 2 reduced [adrenodoxin] + O2 + 2 H(+) = (20R,22R)-20,22-dihydroxycholesterol + 2 oxidized [adrenodoxin] + H2O. It catalyses the reaction (20R,22R)-20,22-dihydroxycholesterol + 2 reduced [adrenodoxin] + O2 + 2 H(+) = 4-methylpentanal + pregnenolone + 2 oxidized [adrenodoxin] + 2 H2O. Its pathway is lipid metabolism; C21-steroid hormone metabolism. It functions in the pathway steroid metabolism; cholesterol metabolism. In terms of biological role, a cytochrome P450 monooxygenase that catalyzes the side-chain hydroxylation and cleavage of cholesterol to pregnenolone, the precursor of most steroid hormones. Catalyzes three sequential oxidation reactions of cholesterol, namely the hydroxylation at C22 followed with the hydroxylation at C20 to yield 20R,22R-hydroxycholesterol that is further cleaved between C20 and C22 to yield the C21-steroid pregnenolone and 4-methylpentanal. Mechanistically, uses molecular oxygen inserting one oxygen atom into a substrate and reducing the second into a water molecule. Two electrons are provided by NADPH via a two-protein mitochondrial transfer system comprising flavoprotein FDXR (adrenodoxin/ferredoxin reductase) and nonheme iron-sulfur protein FDX1 or FDX2 (adrenodoxin/ferredoxin). The chain is Cholesterol side-chain cleavage enzyme, mitochondrial from Capra hircus (Goat).